Reading from the N-terminus, the 279-residue chain is Protein phosphatase 1 regulatory subunit 3E (279 aa).

A phosphoserine mark is found at serine 16 and serine 33. The disordered stretch occupies residues 28–89 (RSQRPSLEEE…RSPDTRKRVR (62 aa)). The span at 51–65 (ARSRAHVPGRGRRAR) shows a compositional bias: basic residues. A Phosphoserine modification is found at serine 66. Residues 87–90 (RVRF) carry the PP1-binding motif motif. The CBM21 domain maps to 154–259 (AARLQAQRIC…NNGGRDYALL (106 aa)). Residues 176 to 198 (GSARVLDLAYEKRVSVRWSADGW) are glycogen-binding motif. A substrate-binding motif region spans residues 248–256 (WDNNGGRDY).

Expressed in liver and heart, with low levels in skeletal muscle.

Acts as a glycogen-targeting subunit for PP1. PP1 is involved in glycogen metabolism and contributes to the activation of glycogen synthase leading to an increase in glycogen synthesis. This is Protein phosphatase 1 regulatory subunit 3E (Ppp1r3e) from Rattus norvegicus (Rat).